The primary structure comprises 1508 residues: Ras guanine nucleotide exchange factor Y (1508 aa).

Disordered regions lie at residues 1 to 73 (MIII…NNNE), 128 to 182 (KVLS…PKSV), 197 to 272 (IDNN…YSTS), 396 to 517 (ILQC…EDED), 565 to 593 (LSEN…SIPT), 606 to 727 (LPNI…AEPS), 831 to 1021 (NVII…SNKE), and 1153 to 1172 (TNED…TNKN). 2 stretches are compositionally biased toward low complexity: residues 9–22 (NINN…NNNS) and 33–72 (NNNN…NNNN). Polar residues-rich tracts occupy residues 128 to 150 (KVLS…TNTI) and 172 to 182 (DRTSQDIPKSV). Residues 199–216 (NNTTNNNSNNNNNSSLST) show a composition bias toward low complexity. Over residues 223-232 (DSLETNPIKD) the composition is skewed to basic and acidic residues. Over residues 233-250 (EESEESEESEESKEEEEE) the composition is skewed to acidic residues. The span at 255-272 (IKTTKTTSETIESSYSTS) shows a compositional bias: low complexity. Positions 399 to 409 (CKDDSSSKDQD) are enriched in basic and acidic residues. Positions 413–447 (NNSAGSSGNSSASNSNRNSIAFSSSNHFSSESSQS) are enriched in low complexity. Over residues 465–475 (PQSPSPSPSPP) the composition is skewed to pro residues. The segment covering 492 to 510 (FNQQTNFSVSPTKSPSNEK) has biased composition (polar residues). Composition is skewed to low complexity over residues 574 to 593 (NQPS…SIPT), 606 to 660 (LPNI…LTES), 668 to 687 (NNNN…NNNN), 831 to 855 (NVII…NTVK), 862 to 891 (NKSS…SLTP), 942 to 984 (SLWS…SPPT), 993 to 1019 (ITTG…NNSN), and 1160 to 1172 (SNSN…TNKN). The stretch at 659-686 (ESLKTRIEENNNNNNNKNINNNNNNNNN) forms a coiled coil. Residues 1074–1234 (NRIKVRSASL…IILKIIDRKA (161 aa)) form the N-terminal Ras-GEF domain. In terms of domain architecture, Ras-GEF spans 1278–1508 (DDLEIARQLT…LYKQSKIIEP (231 aa)).

Functionally, promotes the exchange of Ras-bound GDP by GTP. The sequence is that of Ras guanine nucleotide exchange factor Y (gefY) from Dictyostelium discoideum (Social amoeba).